The sequence spans 206 residues: Sclerostin domain-containing protein 1 (206 aa).

The signal sequence occupies residues 1–23 (MLPPAIHLSLIPLLCILMKNCLA). The disordered stretch occupies residues 42–62 (AHPSSNSTLNQARNGGRHFSS). Polar residues predominate over residues 43–62 (HPSSNSTLNQARNGGRHFSS). Asn-47 is a glycosylation site (N-linked (GlcNAc...) asparagine). 4 disulfide bridges follow: Cys-75/Cys-133, Cys-89/Cys-147, Cys-100/Cys-163, and Cys-104/Cys-165. One can recognise a CTCK domain in the interval 75–170 (CRELRSTKYI…TACKCKRYTR (96 aa)). N-linked (GlcNAc...) asparagine glycosylation is present at Asn-173. Residues 176–206 (SHNFESVSPAKPAQHHRERKRASKSSKHSLS) are disordered. A compositionally biased stretch (basic residues) spans 188 to 206 (AQHHRERKRASKSSKHSLS).

The protein belongs to the sclerostin family. Interacts with BMP2, BMP4, BMP6 and BMP7 with high affinity. Highly expressed within the maximally sensitized/receptive endometrium. Weakly expressed in brain, kidney and the female reproductive tract. Expressed in the dermal papilla (DP) and at high level in the precortex of both anagen vibrissae and pelage follicles. Dynymic expression during the hair cycle.

The protein resides in the secreted. Functionally, directly antagonizes activity of BMP2, BMP4, BMP6 and BMP7 in a dose-dependent manner. May be involved in the onset of endometrial receptivity for implantation/sensitization for the decidual cell reaction. Enhances Wnt signaling and inhibits TGF-beta signaling. This chain is Sclerostin domain-containing protein 1 (Sostdc1), found in Rattus norvegicus (Rat).